The primary structure comprises 545 residues: Chaperonin GroEL (545 aa).

ATP contacts are provided by residues 30–33, K51, 87–91, G415, and D495; these read TLGP and DGTTT.

It belongs to the chaperonin (HSP60) family. As to quaternary structure, forms a cylinder of 14 subunits composed of two heptameric rings stacked back-to-back. Interacts with the co-chaperonin GroES.

It is found in the cytoplasm. The catalysed reaction is ATP + H2O + a folded polypeptide = ADP + phosphate + an unfolded polypeptide.. Functionally, together with its co-chaperonin GroES, plays an essential role in assisting protein folding. The GroEL-GroES system forms a nano-cage that allows encapsulation of the non-native substrate proteins and provides a physical environment optimized to promote and accelerate protein folding. This is Chaperonin GroEL from Shewanella baltica (strain OS155 / ATCC BAA-1091).